Reading from the N-terminus, the 412-residue chain is Adenosine receptor A2a (412 aa).

At 1-7 (MPIMGSS) the chain is on the extracellular side. A helical transmembrane segment spans residues 8–32 (VYITVELAIAVLAILGNVLVCWAVW). Residues 33-42 (LNSNLQNVTN) are Cytoplasmic-facing. A helical transmembrane segment spans residues 43 to 66 (YFVVSLAAADIAVGVLAIPFAITI). Residues 67-77 (STGFCAACHGC) lie on the Extracellular side of the membrane. 3 cysteine pairs are disulfide-bonded: cysteine 71–cysteine 159, cysteine 74–cysteine 146, and cysteine 77–cysteine 166. A helical transmembrane segment spans residues 78–100 (LFIACFVLVLTQSSIFSLLAIAI). Residues 101 to 120 (DRYIAIRIPLRYNGLVTGTR) are Cytoplasmic-facing. Residues 121–143 (AKGIIAICWVLSFAIGLTPMLGW) form a helical membrane-spanning segment. The Extracellular portion of the chain corresponds to 144 to 173 (NNCGQPKEGKNHSQGCGEGQVACLFEDVVP). Residue asparagine 154 is glycosylated (N-linked (GlcNAc...) asparagine). Residue glutamate 169 participates in adenosine binding. The helical transmembrane segment at 174–198 (MNYMVYFNFFACVLVPLLLMLGVYL) threads the bilayer. Residues 199 to 234 (RIFLAARRQLKQMESQPLPGERARSTLQKEVHAAKS) lie on the Cytoplasmic side of the membrane. The helical transmembrane segment at 235 to 258 (LAIIVGLFALCWLPLHIINCFTFF) threads the bilayer. Asparagine 253 serves as a coordination point for adenosine. An intrachain disulfide couples cysteine 259 to cysteine 262. Residues 259-266 (CPDCSHAP) are Extracellular-facing. Residues 267-290 (LWLMYLAIVLSHTNSVVNPFIYAY) traverse the membrane as a helical segment. Residues serine 277 and histidine 278 each contribute to the adenosine site. Residues 291 to 412 (RIREFRQTFR…PLAQDGAGVS (122 aa)) lie on the Cytoplasmic side of the membrane. Positions 391–412 (KGVCPEPPGLDDPLAQDGAGVS) are disordered.

The protein belongs to the G-protein coupled receptor 1 family. Interacts (via cytoplasmic C-terminal domain) with USP4; the interaction is direct. May interact with DRD4. Interacts with NECAB2. Interacts (via cytoplasmic C-terminal domain) with GAS2L2; interaction enhances receptor-mediated adenylyl cyclase activity. In terms of processing, ubiquitinated. Deubiquitinated by USP4; leading to stabilization and expression at the cell surface.

The protein resides in the cell membrane. Its function is as follows. Receptor for adenosine. The activity of this receptor is mediated by G proteins which activate adenylyl cyclase. This Homo sapiens (Human) protein is Adenosine receptor A2a (ADORA2A).